Reading from the N-terminus, the 299-residue chain is S-formylglutathione hydrolase (299 aa).

The Cu cation site is built by methionine 1 and histidine 140. Catalysis depends on charge relay system residues serine 161, aspartate 241, and histidine 276.

It belongs to the esterase D family. In terms of assembly, monomer.

It is found in the cytoplasm. The catalysed reaction is S-formylglutathione + H2O = formate + glutathione + H(+). Functionally, serine hydrolase involved in the detoxification of formaldehyde. This chain is S-formylglutathione hydrolase, found in Saccharomyces cerevisiae (strain ATCC 204508 / S288c) (Baker's yeast).